We begin with the raw amino-acid sequence, 151 residues long: Small ribosomal subunit protein bS6 (151 aa).

The disordered stretch occupies residues glutamate 97–asparagine 151. Residues glutamine 105–asparagine 151 show a composition bias toward basic and acidic residues.

This sequence belongs to the bacterial ribosomal protein bS6 family.

Binds together with bS18 to 16S ribosomal RNA. The sequence is that of Small ribosomal subunit protein bS6 from Methylorubrum extorquens (strain CM4 / NCIMB 13688) (Methylobacterium extorquens).